A 308-amino-acid chain; its full sequence is Isoaspartyl peptidase/L-asparaginase (308 aa).

Met-1 is modified (N-acetylmethionine). Thr-168 serves as the catalytic Nucleophile. Substrate-binding positions include 196–199 (RVGD) and 219–222 (TGHG).

This sequence belongs to the Ntn-hydrolase family. Heterodimer of an alpha and beta chain produced by autocleavage. This heterodimer may then dimerize in turn, giving rise to a heterotetramer. Cleaved into an alpha and beta chain by autocatalysis; this activates the enzyme. The N-terminal residue of the beta subunit is responsible for the nucleophile hydrolase activity. As to expression, expressed in brain, kidney, testis and tissues of the gastrointestinal tract. Present in sperm (at protein level). Over-expressed in uterine, mammary, prostatic and ovarian carcinoma.

Its subcellular location is the cytoplasm. It catalyses the reaction L-asparagine + H2O = L-aspartate + NH4(+). The enzyme catalyses Cleavage of a beta-linked Asp residue from the N-terminus of a polypeptide.. With respect to regulation, glycine accelerates autocleavage into an alpha and beta chain. Functionally, has both L-asparaginase and beta-aspartyl peptidase activity. May be involved in the production of L-aspartate, which can act as an excitatory neurotransmitter in some brain regions. Is highly active with L-Asp beta-methyl ester. Besides, has catalytic activity toward beta-aspartyl dipeptides and their methyl esters, including beta-L-Asp-L-Phe, beta-L-Asp-L-Phe methyl ester (aspartame), beta-L-Asp-L-Ala, beta-L-Asp-L-Leu and beta-L-Asp-L-Lys. Does not have aspartylglucosaminidase activity and is inactive toward GlcNAc-L-Asn. Likewise, has no activity toward glutamine. The polypeptide is Isoaspartyl peptidase/L-asparaginase (ASRGL1) (Homo sapiens (Human)).